We begin with the raw amino-acid sequence, 699 residues long: Dymeclin (699 aa).

Gly2 carries N-myristoyl glycine lipidation. The residue at position 346 (Ser346) is a Phosphoserine.

This sequence belongs to the dymeclin family.

The sequence is that of Dymeclin from Drosophila melanogaster (Fruit fly).